The following is a 420-amino-acid chain: D-tagatose-1,6-bisphosphate aldolase subunit GatZ (420 aa).

This sequence belongs to the GatZ/KbaZ family. GatZ subfamily. Forms a complex with GatY.

It participates in carbohydrate metabolism; D-tagatose 6-phosphate degradation; D-glyceraldehyde 3-phosphate and glycerone phosphate from D-tagatose 6-phosphate: step 2/2. Functionally, component of the tagatose-1,6-bisphosphate aldolase GatYZ that is required for full activity and stability of the Y subunit. Could have a chaperone-like function for the proper and stable folding of GatY. When expressed alone, GatZ does not show any aldolase activity. Is involved in the catabolism of galactitol. The protein is D-tagatose-1,6-bisphosphate aldolase subunit GatZ of Escherichia coli O17:K52:H18 (strain UMN026 / ExPEC).